A 176-amino-acid chain; its full sequence is Ribosome maturation factor RimM (176 aa).

The region spanning 99–173 (ADEYYWHDLL…TMTITPLEGL (75 aa)) is the PRC barrel domain.

It belongs to the RimM family. As to quaternary structure, binds ribosomal protein uS19.

The protein localises to the cytoplasm. An accessory protein needed during the final step in the assembly of 30S ribosomal subunit, possibly for assembly of the head region. Essential for efficient processing of 16S rRNA. May be needed both before and after RbfA during the maturation of 16S rRNA. It has affinity for free ribosomal 30S subunits but not for 70S ribosomes. This Trichlorobacter lovleyi (strain ATCC BAA-1151 / DSM 17278 / SZ) (Geobacter lovleyi) protein is Ribosome maturation factor RimM.